Consider the following 212-residue polypeptide: Hemagglutinin 2 (212 aa).

The protein localises to the secreted. Functionally, induces agglutination of neuraminidase-treated erythrocytes. This chain is Hemagglutinin 2 (hag2), found in Eikenella corrodens.